We begin with the raw amino-acid sequence, 164 residues long: Neurotrophin-3 (164 aa).

Positions 1–3 are cleaved as a signal peptide; the sequence is IQS. A propeptide spanning residues 4-118 is cleaved from the precursor; the sequence is TSMDQGBLSE…GLNRTSRRKR (115 aa). The interval 89 to 126 is disordered; sequence LLSENTPLEPPPLYLTEEPMGLNRTSRRKRFAEGKSHR. N111 carries an N-linked (GlcNAc...) asparagine glycan.

Belongs to the NGF-beta family.

The protein resides in the secreted. Functionally, seems to promote the survival of visceral and proprioceptive sensory neurons. This Cylindrophis ruffus (Red-tailed pipe snake) protein is Neurotrophin-3 (NTF3).